Reading from the N-terminus, the 311-residue chain is 33 kDa chaperonin (311 aa).

2 disulfides stabilise this stretch: Cys240-Cys242 and Cys273-Cys276.

Belongs to the HSP33 family. Under oxidizing conditions two disulfide bonds are formed involving the reactive cysteines. Under reducing conditions zinc is bound to the reactive cysteines and the protein is inactive.

The protein resides in the cytoplasm. Its function is as follows. Redox regulated molecular chaperone. Protects both thermally unfolding and oxidatively damaged proteins from irreversible aggregation. Plays an important role in the bacterial defense system toward oxidative stress. In Trichodesmium erythraeum (strain IMS101), this protein is 33 kDa chaperonin.